Consider the following 245-residue polypeptide: Orotidine 5'-phosphate decarboxylase (245 aa).

Substrate contacts are provided by residues Asp22, Lys44, 71 to 80, Thr131, Arg192, Gln201, Gly221, and Arg222; that span reads DLKFHDIPNT. The Proton donor role is filled by Lys73.

This sequence belongs to the OMP decarboxylase family. Type 1 subfamily. Homodimer.

It carries out the reaction orotidine 5'-phosphate + H(+) = UMP + CO2. It functions in the pathway pyrimidine metabolism; UMP biosynthesis via de novo pathway; UMP from orotate: step 2/2. Its function is as follows. Catalyzes the decarboxylation of orotidine 5'-monophosphate (OMP) to uridine 5'-monophosphate (UMP). The chain is Orotidine 5'-phosphate decarboxylase from Escherichia coli O157:H7.